Here is a 546-residue protein sequence, read N- to C-terminus: Membrane protein insertase YidC (546 aa).

A helical membrane pass occupies residues 6–26 (NLLLIALLFVSFMIWQAWQVD). Positions 30–44 (QPTAQTTQQTTNTAT) are enriched in low complexity. The segment at 30–55 (QPTAQTTQQTTNTATGDKASQAVPGS) is disordered. 4 consecutive transmembrane segments (helical) span residues 344-364 (KFIHSFVGNWGFSIIVITFIV), 419-439 (LGGCLPLIIQMPIFLALYYML), 457-477 (LSAQDPYYILPILMGITMYFI), and 498-518 (PVIFTVFFLWFPAGLVLYYIV).

This sequence belongs to the OXA1/ALB3/YidC family. Type 1 subfamily. As to quaternary structure, interacts with the Sec translocase complex via SecD. Specifically interacts with transmembrane segments of nascent integral membrane proteins during membrane integration.

It is found in the cell inner membrane. Required for the insertion and/or proper folding and/or complex formation of integral membrane proteins into the membrane. Involved in integration of membrane proteins that insert both dependently and independently of the Sec translocase complex, as well as at least some lipoproteins. Aids folding of multispanning membrane proteins. This is Membrane protein insertase YidC from Yersinia pestis.